The following is a 314-amino-acid chain: Solute carrier family 25 member 44 (314 aa).

Solcar repeat units follow at residues 18 to 100 (KKFY…TRKF), 107 to 210 (SNTV…YAEQ), and 220 to 302 (PHIV…LKKL). Transmembrane regions (helical) follow at residues 20-42 (FYVF…TLIR), 71-90 (TGLY…GQCY), 113-133 (LVAG…IDVV), 185-201 (GYVA…AVWW), 222-239 (IVFQ…ASIL), and 278-296 (LSAR…VVGY).

Belongs to the mitochondrial carrier (TC 2.A.29) family.

The protein localises to the mitochondrion membrane. It carries out the reaction L-valine(in) = L-valine(out). It catalyses the reaction L-leucine(in) = L-leucine(out). In terms of biological role, mitochondrial solute transporter which transports branched-chain amino acid (BCAA; valine, leucine and isoleucine) into mitochondria in brown adipose tissue (BAT). BAT is involved in BCAA catabolism and actively utilizes BCAA in the mitochondria for thermogenesis. In Homo sapiens (Human), this protein is Solute carrier family 25 member 44.